Consider the following 410-residue polypeptide: Dual-specificity RNA methyltransferase RlmN (410 aa).

E123 serves as the catalytic Proton acceptor. Residues 129–378 (EEGRGTLCIS…IRTPRGRDIL (250 aa)) form the Radical SAM core domain. C136 and C381 form a disulfide bridge. [4Fe-4S] cluster-binding residues include C143, C147, and C150. S-adenosyl-L-methionine contacts are provided by residues 207 to 208 (GE), S239, 261 to 263 (SLH), and N338. Catalysis depends on C381, which acts as the S-methylcysteine intermediate.

The protein belongs to the radical SAM superfamily. RlmN family. [4Fe-4S] cluster is required as a cofactor.

The protein resides in the cytoplasm. The catalysed reaction is adenosine(2503) in 23S rRNA + 2 reduced [2Fe-2S]-[ferredoxin] + 2 S-adenosyl-L-methionine = 2-methyladenosine(2503) in 23S rRNA + 5'-deoxyadenosine + L-methionine + 2 oxidized [2Fe-2S]-[ferredoxin] + S-adenosyl-L-homocysteine. It carries out the reaction adenosine(37) in tRNA + 2 reduced [2Fe-2S]-[ferredoxin] + 2 S-adenosyl-L-methionine = 2-methyladenosine(37) in tRNA + 5'-deoxyadenosine + L-methionine + 2 oxidized [2Fe-2S]-[ferredoxin] + S-adenosyl-L-homocysteine. Its function is as follows. Specifically methylates position 2 of adenine 2503 in 23S rRNA and position 2 of adenine 37 in tRNAs. m2A2503 modification seems to play a crucial role in the proofreading step occurring at the peptidyl transferase center and thus would serve to optimize ribosomal fidelity. In Mesorhizobium japonicum (strain LMG 29417 / CECT 9101 / MAFF 303099) (Mesorhizobium loti (strain MAFF 303099)), this protein is Dual-specificity RNA methyltransferase RlmN.